Reading from the N-terminus, the 255-residue chain is MKVKVFDLNGQPVDEIELPRVFLTPFRPDLIRRAVIASWTHRIQPQGRDPMAGKRRVTENIGKGHGMARVERLKTPPRYAAFVPFARGGRRAHPPKVEKIIWEGINKKERRLAIMSAIAATANYDIVKSRGHIVDNVPQLPLIVVDDLQKVSKTRETREIFKKLGIWEDIERAKEKSGVRAGKGKMRGRRYKKAKGPLIVVGKNEGIVFGARNHPGVDVVVVDNLGVEHLAPGTHPGRLTVWTVSAIERLREIYG.

The protein belongs to the universal ribosomal protein uL4 family. As to quaternary structure, part of the 50S ribosomal subunit.

In terms of biological role, one of the primary rRNA binding proteins, this protein initially binds near the 5'-end of the 23S rRNA. It is important during the early stages of 50S assembly. It makes multiple contacts with different domains of the 23S rRNA in the assembled 50S subunit and ribosome. Functionally, forms part of the polypeptide exit tunnel. The protein is Large ribosomal subunit protein uL4 of Pyrococcus horikoshii (strain ATCC 700860 / DSM 12428 / JCM 9974 / NBRC 100139 / OT-3).